The primary structure comprises 695 residues: uncharacterized protein (695 aa).

A Phosphoserine modification is found at S113. The next 12 membrane-spanning stretches (helical) occupy residues 237–257, 265–285, 313–333, 344–364, 380–400, 408–428, 457–477, 488–508, 531–551, 565–585, 604–624, and 633–653; these read FPLI…SLTV, LAAV…FEGI, IAFS…SEPL, INLT…YIFF, GIYV…TLVW, FIGA…LLLF, AFSG…LTLF, AQSA…AIGI, QVGL…LVFG, VIKL…FDSL, IVNL…LSWF, and WIGI…YVLF. Residues 673-688 show a composition bias toward acidic residues; sequence EVDSDEYLTDSDDPDE. Residues 673–695 are disordered; that stretch reads EVDSDEYLTDSDDPDENTALLGA.

It belongs to the multi antimicrobial extrusion (MATE) (TC 2.A.66.1) family.

It is found in the membrane. This is an uncharacterized protein from Saccharomyces cerevisiae (strain ATCC 204508 / S288c) (Baker's yeast).